Reading from the N-terminus, the 113-residue chain is Hydrogenase maturation factor HypA (113 aa).

Residue histidine 2 coordinates Ni(2+). The Zn(2+) site is built by cysteine 70, cysteine 73, cysteine 86, and cysteine 88.

The protein belongs to the HypA/HybF family.

Involved in the maturation of [NiFe] hydrogenases. Required for nickel insertion into the metal center of the hydrogenase. This is Hydrogenase maturation factor HypA from Nostoc sp. (strain PCC 7120 / SAG 25.82 / UTEX 2576).